A 293-amino-acid chain; its full sequence is 4-diphosphocytidyl-2-C-methyl-D-erythritol kinase (293 aa).

Lys-11 is an active-site residue. An ATP-binding site is contributed by 96-106 (PVAAGLGGGSS). The active site involves Asp-138.

It belongs to the GHMP kinase family. IspE subfamily.

It catalyses the reaction 4-CDP-2-C-methyl-D-erythritol + ATP = 4-CDP-2-C-methyl-D-erythritol 2-phosphate + ADP + H(+). Its pathway is isoprenoid biosynthesis; isopentenyl diphosphate biosynthesis via DXP pathway; isopentenyl diphosphate from 1-deoxy-D-xylulose 5-phosphate: step 3/6. Functionally, catalyzes the phosphorylation of the position 2 hydroxy group of 4-diphosphocytidyl-2C-methyl-D-erythritol. The sequence is that of 4-diphosphocytidyl-2-C-methyl-D-erythritol kinase from Xanthobacter autotrophicus (strain ATCC BAA-1158 / Py2).